We begin with the raw amino-acid sequence, 65 residues long: Diapause-specific peptide (65 aa).

The first 24 residues, 1 to 24 (MGAALKMTIFLLIVACAMIATTEA), serve as a signal peptide directing secretion. Cystine bridges form between C31/C45, C35/C57, and C46/C64.

In terms of tissue distribution, highly expressed in the fat body.

The protein resides in the secreted. In terms of biological role, has antifungal activity against T.rubrum. Blocks voltage-dependent N-type calcium channels (Cav2.2 / CACNA1B). In Gastrophysa atrocyanea (Leaf beetle), this protein is Diapause-specific peptide.